A 740-amino-acid chain; its full sequence is Arf-GAP with coiled-coil, ANK repeat and PH domain-containing protein 1 (740 aa).

The 226-residue stretch at 1-226 (MTVKLDFEEC…RKELGTQLHN (226 aa)) folds into the BAR domain. A required for formation of endosomal tubules when overexpressed with PIP5K1C region spans residues 1 to 382 (MTVKLDFEEC…RGPGQVSGYH (382 aa)). The PH domain occupies 265 to 360 (GLVMEGHLFK…WVSAVQSSIA (96 aa)). The 123-residue stretch at 405–527 (GQVAAQVQSV…KFLTKLPEIR (123 aa)) folds into the Arf-GAP domain. A required for interaction with GULP1 region spans residues 405–740 (GQVAAQVQSV…SRRSHDLHTL (336 aa)). The segment at 420-443 (CCDCREPAPEWASINLGVTLCIQC) adopts a C4-type zinc-finger fold. Tyr485 is subject to 3'-nitrotyrosine. The interval 525-562 (EIRGRRGGRGPPRGHPPVPPKPPIRPHSGIVRSKSECP) is disordered. The prevents interaction with ITGB1 when S-554 is not phosphorylated stretch occupies residues 525-566 (EIRGRRGGRGPPRGHPPVPPKPPIRPHSGIVRSKSECPSDDM). Residues 537 to 549 (RGHPPVPPKPPIR) show a composition bias toward pro residues. ANK repeat units lie at residues 606 to 635 (GNATPLIRATAANSLLACEFLLQNGANVNQ), 639 to 668 (AGRGPLHHATILGHTGLACLFLKRGADLGA), and 672 to 702 (EGRDPLTIAMETTNADIVTLLRLAKMREAEA).

As to quaternary structure, banana-shaped homodimer laterally assembling into tetramers, the tetramers further pack helically onto the membrane. Interacts with GTP-bound ARF6. Interacts with third cytoplasmic loop of SLC2A4/GLUT4. Interacts with CLTC. Interacts with GULP1. Forms a complex with GDP-bound ARF6 and GULP1. Interacts with ITGB1; required for ITGB1 recycling.

It is found in the recycling endosome membrane. Its activity is regulated as follows. GAP activity stimulated by phosphatidylinositol 4,5-bisphosphate (PIP2) and phosphatidic acid. GTPase-activating protein (GAP) for ADP ribosylation factor 6 (ARF6) required for clathrin-dependent export of proteins from recycling endosomes to trans-Golgi network and cell surface. Required for regulated export of ITGB1 from recycling endosomes to the cell surface and ITGB1-dependent cell migration. This Mus musculus (Mouse) protein is Arf-GAP with coiled-coil, ANK repeat and PH domain-containing protein 1 (Acap1).